The following is a 453-amino-acid chain: Bifunctional protein GlmU (453 aa).

Residues 1 to 231 (MERTCLAIIL…EVEMTGCNNR (231 aa)) are pyrophosphorylase. UDP-N-acetyl-alpha-D-glucosamine is bound by residues 10 to 13 (LAAG), lysine 24, glutamine 77, 82 to 83 (GT), 105 to 107 (YGD), glycine 143, glutamate 157, asparagine 172, and asparagine 229. Aspartate 107 contributes to the Mg(2+) binding site. Asparagine 229 lines the Mg(2+) pocket. Positions 232–252 (AELAFIERLWQERRRHELMLS) are linker. The N-acetyltransferase stretch occupies residues 253–453 (GVTMIAPETV…AIKAAKKGSH (201 aa)). UDP-N-acetyl-alpha-D-glucosamine contacts are provided by arginine 318 and lysine 336. Histidine 348 serves as the catalytic Proton acceptor. Positions 351 and 362 each coordinate UDP-N-acetyl-alpha-D-glucosamine. Acetyl-CoA-binding positions include alanine 365, 371-372 (NY), serine 390, serine 408, and arginine 425.

This sequence in the N-terminal section; belongs to the N-acetylglucosamine-1-phosphate uridyltransferase family. In the C-terminal section; belongs to the transferase hexapeptide repeat family. Homotrimer. It depends on Mg(2+) as a cofactor.

It localises to the cytoplasm. It catalyses the reaction alpha-D-glucosamine 1-phosphate + acetyl-CoA = N-acetyl-alpha-D-glucosamine 1-phosphate + CoA + H(+). It carries out the reaction N-acetyl-alpha-D-glucosamine 1-phosphate + UTP + H(+) = UDP-N-acetyl-alpha-D-glucosamine + diphosphate. The protein operates within nucleotide-sugar biosynthesis; UDP-N-acetyl-alpha-D-glucosamine biosynthesis; N-acetyl-alpha-D-glucosamine 1-phosphate from alpha-D-glucosamine 6-phosphate (route II): step 2/2. It functions in the pathway nucleotide-sugar biosynthesis; UDP-N-acetyl-alpha-D-glucosamine biosynthesis; UDP-N-acetyl-alpha-D-glucosamine from N-acetyl-alpha-D-glucosamine 1-phosphate: step 1/1. Its pathway is bacterial outer membrane biogenesis; LPS lipid A biosynthesis. In terms of biological role, catalyzes the last two sequential reactions in the de novo biosynthetic pathway for UDP-N-acetylglucosamine (UDP-GlcNAc). The C-terminal domain catalyzes the transfer of acetyl group from acetyl coenzyme A to glucosamine-1-phosphate (GlcN-1-P) to produce N-acetylglucosamine-1-phosphate (GlcNAc-1-P), which is converted into UDP-GlcNAc by the transfer of uridine 5-monophosphate (from uridine 5-triphosphate), a reaction catalyzed by the N-terminal domain. This chain is Bifunctional protein GlmU, found in Rhizobium rhizogenes (strain K84 / ATCC BAA-868) (Agrobacterium radiobacter).